The primary structure comprises 266 residues: Uridylate kinase (266 aa).

26–29 (KLGG) contacts ATP. Residue Gly-67 coordinates UMP. 2 residues coordinate ATP: Gly-68 and Arg-72. UMP-binding positions include Asp-87 and 148–155 (LGAPYFST). Residues Tyr-181 and Asp-184 each coordinate ATP.

It belongs to the UMP kinase family. As to quaternary structure, homohexamer.

It is found in the cytoplasm. The enzyme catalyses UMP + ATP = UDP + ADP. Its pathway is pyrimidine metabolism; CTP biosynthesis via de novo pathway; UDP from UMP (UMPK route): step 1/1. With respect to regulation, inhibited by UTP. In terms of biological role, catalyzes the reversible phosphorylation of UMP to UDP. The protein is Uridylate kinase of Acidothermus cellulolyticus (strain ATCC 43068 / DSM 8971 / 11B).